Here is a 291-residue protein sequence, read N- to C-terminus: Halorhodopsin (291 aa).

Residues 1–30 (MTETLPPVTESAVALQAEVTQRELFEFVLN) are Extracellular-facing. Residues 31–56 (DPLLASSLYINIALAGLSILLFVFMT) form a helical membrane-spanning segment. At 57 to 62 (RGLDDP) the chain is on the cytoplasmic side. The chain crosses the membrane as a helical span at residues 63-86 (RAKLIAVSTILVPVVSIASYTGLA). Residues 87–120 (SGLTISVLEMPAGHFAEGSSVMLGGEEVDGVVTM) lie on the Extracellular side of the membrane. A helical membrane pass occupies residues 121-142 (WGRYLTWALSTPMILLALGLLA). Topologically, residues 143-145 (GSN) are cytoplasmic. The helical transmembrane segment at 146–169 (ATKLFTAITFDIAMCVTGLAAALT) threads the bilayer. Residues 170–172 (TSS) are Extracellular-facing. Residues 173–195 (HLMRWFWYAISCACFLVVLYILL) form a helical membrane-spanning segment. Topologically, residues 196-207 (VEWAQDAKAAGT) are cytoplasmic. Residues 208-231 (ADMFNTLKLLTVVMWLGYPIVWAL) form a helical membrane-spanning segment. Residues 232–240 (GVEGIAVLP) are Extracellular-facing. Residues 241-269 (VGVTSWGYSFLDIVAKYIFAFLLLNYLTS) traverse the membrane as a helical segment. K256 carries the post-translational modification N6-(retinylidene)lysine. At 270–291 (NESVVSGSILDVPSASGTPADD) the chain is on the cytoplasmic side.

This sequence belongs to the archaeal/bacterial/fungal opsin family.

Its subcellular location is the cell membrane. Functionally, light-driven anion pump. Binding affinity for the anions is in the order, bromide &gt; chloride &gt; nitrate &gt; azide &gt; bromate and binding is pH dependent. The sequence is that of Halorhodopsin (hop) from Natronomonas pharaonis (Natronobacterium pharaonis).